Reading from the N-terminus, the 154-residue chain is Deoxyuridine 5'-triphosphate nucleotidohydrolase (154 aa).

Substrate-binding positions include 64 to 66 (RSG), N77, 81 to 83 (TVD), and K91.

It belongs to the dUTPase family. In terms of assembly, homotrimer. It depends on Mg(2+) as a cofactor.

The enzyme catalyses dUTP + H2O = dUMP + diphosphate + H(+). It functions in the pathway pyrimidine metabolism; dUMP biosynthesis; dUMP from dCTP (dUTP route): step 2/2. Functionally, this enzyme is involved in nucleotide metabolism: it produces dUMP, the immediate precursor of thymidine nucleotides and it decreases the intracellular concentration of dUTP so that uracil cannot be incorporated into DNA. In Mycolicibacterium gilvum (strain PYR-GCK) (Mycobacterium gilvum (strain PYR-GCK)), this protein is Deoxyuridine 5'-triphosphate nucleotidohydrolase.